Reading from the N-terminus, the 311-residue chain is Olfactory receptor 6B1 (311 aa).

Topologically, residues 1–25 (MELENQTRVTKFILVGFPGSLSMRA) are extracellular. Residue Asn-5 is glycosylated (N-linked (GlcNAc...) asparagine). Residues 26 to 46 (AMFLIFLVAYILTVAENVIII) form a helical membrane-spanning segment. Residues 47 to 54 (LLVLQNRP) are Cytoplasmic-facing. Residues 55–75 (LHKPMYFFLANLSFLETWYIS) form a helical membrane-spanning segment. The Extracellular segment spans residues 76–99 (VTVPKLLFSFWSVNNSISFTLCMI). Cys-97 and Cys-189 are disulfide-bonded. Residues 100–120 (QLYFFIALMCTECVLLAAMAY) traverse the membrane as a helical segment. Residues 121 to 139 (DRYVAICRPLHYPTIMSHG) are Cytoplasmic-facing. A helical transmembrane segment spans residues 140–160 (LCFRLALGSWAIGFGISLAKI). Over 161–196 (YFISCLSFCGPNVINHFFCDISPVLNLSCTDMSITE) the chain is Extracellular. Residues 197-217 (LVDFILALVIFLFPLFITVLS) form a helical membrane-spanning segment. At 218–235 (YGCILATILCMPTGKQKA) the chain is on the cytoplasmic side. Residues 236-256 (FSTCASHLVVVTIFYSAIIFM) traverse the membrane as a helical segment. At 257–269 (YARPRVIHAFNMN) the chain is on the extracellular side. Residues 270–290 (KIISIFYAIVTPSLNPFIYCL) form a helical membrane-spanning segment. Over 291-311 (RNREVKEALKKLAYCQASRSD) the chain is Cytoplasmic.

Belongs to the G-protein coupled receptor 1 family.

Its subcellular location is the cell membrane. Functionally, odorant receptor. The sequence is that of Olfactory receptor 6B1 (OR6B1) from Homo sapiens (Human).